A 1509-amino-acid chain; its full sequence is MNRPKREKKSITDVSTLKSLEQIKRARDGEKRTDQLQEEDDERKRLEQLKEQETEFDKEERKRKNRDFIEGDSGYRETSDNEDEDEDEDDDGDNSDDDYSLDEDDEDGGGDGENNDSDQEEAIEVGRKKKRQVKKKSKKDENGEPKVKTPRVKKTKEKKNEIVPEKNRIIQFINNPTESKSTSNNESFFFDKLKKSNSNTLNSTNSTLNSNELSSGGTMSSLDIESMLNDLQSAPDSELDLEKLKEKQLELEKKLEKEALLNKPTISTETIITEGVELDDNYEFDFDFNNPITTNNNNNNNTKTTTTTTTTTITNKNLNKVNSMSLPTRPQAQQFISPKQTNQEDWWSKTGVDSVVLVKKLEEIMPKNSDLLKMNMDGSLDFFLLTTEEDKQGRIILFGKVKLQASKSNKPGGGGGATKQTSITDEPVTKVPLKYASCCIIIEKMERNVFFLPRDYKLDQDGESTTIQVTDTMIEAELKQLVDRSKIKDYKLKKVKRTSAFDYSVPHKNGPVGEQHYVWKLSYPSNQMVFPNDIKGSTFRCAYGITSSPVELFLIKRKIMGPTWLTVSGITLNFDQKKSFARYEATVKSFKSIKPSMYKNEPSPPLTVMSISTKSVMKGSSHEVVMISSVIHESISADGPTENQDSIKYITAIRPLTGQVFPPDFQKPGASTTKQNVTICTSERNLLSFFCETVLNADPDVFAGHNIIGYDIEVILDRLEKLKVMEWAFIGRLKRSSFDRFNHISGRLICDSYLVCKEFLPKEKNYSLVELSKNQLSINKPEINYLSIEPYFETTKKLNIFIEINENDCYIIFLLIFKLLVFPLTKQLTNLAGNQWDKSLKSNRAERIEYLLLHNFHEKKYLLPDKIYQKSSSSGGGGGAKDKDNHAAYSGGLVLDPKIDFYDRYVVLLDFNSLYPSIIQEYNVCFTTINRVKRDDGKWEEAMPPPSSIEKGILPKVLHGLVSKRREIKKRMEQEKNKIIKAQYDIQQQAVKLIANSMYGCLGFSHSRFYALPLAELVTRKGRENLQKGASIVNKMCYDVIYGDTDSLMIYTGVGTFNEAETIGKEIQKKINDQYRGSVMEIGLDGIFKRLLLFKKKKYACLKEFRIDSTTTKCERENKGIDIVRRDYCDLTKDIGQWVLNLILGGEEKIALFSLIKEYLESVQQQIKDNTLAVEKFIITKTLSKQPEEYNDADIQPHVQVALQMRAKGLHVQPGEQVPYIITHGNSSSDIKEEWHHRARAPSDVESIQDVDIDWYLSQQILPSIQRNTGPIGMEPHELAQWLGMTGTKYQKQFDHLQQQSNQDFKPRYTLSTEDLRYKQCKSFNFECPYCGQNNEFTGIVKIDSEGKSESGFDCNQCHAKIPLKKLANQLQLNIRTYLKQYNDWDLRCTECEKVSKNYKETSYRCARPQCRGKMIQIMTSSKLFNQISFFSKLFRNDLSNSDNTTTIIPNEDQNTLKQAKQIIDSFLSKFDQYNVNLNSLLTPSQTLDSFNNYLASSRASIQYPILNK.

Residues 1–162 (MNRPKREKKS…KKTKEKKNEI (162 aa)) are disordered. Composition is skewed to basic and acidic residues over residues 21–35 (EQIK…RTDQ) and 42–79 (ERKR…RETS). Residues 27–67 (RDGEKRTDQLQEEDDERKRLEQLKEQETEFDKEERKRKNRD) are a coiled coil. Residues 80–123 (DNEDEDEDEDDDGDNSDDDYSLDEDDEDGGGDGENNDSDQEEAI) show a composition bias toward acidic residues. Positions 127–137 (RKKKRQVKKKS) are enriched in basic residues. A compositionally biased stretch (basic and acidic residues) spans 138-147 (KKDENGEPKV). Over residues 148 to 157 (KTPRVKKTKE) the composition is skewed to basic residues. 2 coiled-coil regions span residues 234 to 263 (APDS…LLNK) and 958 to 989 (LHGL…IQQQ). Residues Cys-1328, Cys-1331, Cys-1355, Cys-1358, Cys-1389, Cys-1392, Cys-1406, and Cys-1411 each coordinate Zn(2+). Residues 1328-1358 (CPYCGQNNEFTGIVKIDSEGKSESGFDCNQC) form a CysA-type zinc finger. The CysB motif signature appears at 1389–1411 (CTECEKVSKNYKETSYRCARPQC).

It belongs to the DNA polymerase type-B family.

Its subcellular location is the nucleus. The enzyme catalyses DNA(n) + a 2'-deoxyribonucleoside 5'-triphosphate = DNA(n+1) + diphosphate. Its function is as follows. Polymerase alpha in a complex with DNA primase is a replicative polymerase. In Dictyostelium discoideum (Social amoeba), this protein is DNA polymerase alpha catalytic subunit (pola1).